Here is a 286-residue protein sequence, read N- to C-terminus: NH(3)-dependent NAD(+) synthetase (286 aa).

51-58 (GISGGVDS) contributes to the ATP binding site. D57 serves as a coordination point for Mg(2+). R148 provides a ligand contact to deamido-NAD(+). Position 168 (T168) interacts with ATP. A Mg(2+)-binding site is contributed by E173. Deamido-NAD(+) contacts are provided by K181 and D188. K197 and T219 together coordinate ATP. 268 to 269 (HK) is a binding site for deamido-NAD(+).

This sequence belongs to the NAD synthetase family. Homodimer.

The catalysed reaction is deamido-NAD(+) + NH4(+) + ATP = AMP + diphosphate + NAD(+) + H(+). The protein operates within cofactor biosynthesis; NAD(+) biosynthesis; NAD(+) from deamido-NAD(+) (ammonia route): step 1/1. Its function is as follows. Catalyzes the ATP-dependent amidation of deamido-NAD to form NAD. Uses ammonia as a nitrogen source. The protein is NH(3)-dependent NAD(+) synthetase of Paraburkholderia phytofirmans (strain DSM 17436 / LMG 22146 / PsJN) (Burkholderia phytofirmans).